The sequence spans 176 residues: ATP-dependent protease subunit HslV (176 aa).

Threonine 5 is a catalytic residue. Alanine 161, cysteine 164, and threonine 167 together coordinate Na(+).

Belongs to the peptidase T1B family. HslV subfamily. As to quaternary structure, a double ring-shaped homohexamer of HslV is capped on each side by a ring-shaped HslU homohexamer. The assembly of the HslU/HslV complex is dependent on binding of ATP.

It is found in the cytoplasm. The catalysed reaction is ATP-dependent cleavage of peptide bonds with broad specificity.. With respect to regulation, allosterically activated by HslU binding. In terms of biological role, protease subunit of a proteasome-like degradation complex believed to be a general protein degrading machinery. This is ATP-dependent protease subunit HslV from Caldicellulosiruptor saccharolyticus (strain ATCC 43494 / DSM 8903 / Tp8T 6331).